The following is a 71-amino-acid chain: Conotoxin Ca5.1 (71 aa).

An N-terminal signal peptide occupies residues 1–19 (MRCVPVFIILLLLASPAAS). A propeptide spanning residues 20–56 (DPLEKRIQSDLIRAALEDADTKNDPRILEDIVSTALA) is cleaved from the precursor.

This sequence belongs to the conotoxin T superfamily. In terms of processing, contains 2 disulfide bonds that can be either 'C1-C3, C2-C4' or 'C1-C4, C2-C3', since these disulfide connectivities have been observed for conotoxins with cysteine framework V (for examples, see AC P0DQQ7 and AC P81755). As to expression, expressed by the venom duct.

Its subcellular location is the secreted. The protein is Conotoxin Ca5.1 of Conus caracteristicus (Characteristic cone).